The primary structure comprises 1460 residues: Probable outer membrane protein PmpC (1460 aa).

Positions 1–20 (MKFLSATAVFAAALPSITSA) are cleaved as a signal peptide. 5 disordered regions span residues 21–48 (SSVESQIETKDLNSSRTGSSSSQSFTEI), 92–212 (SEEN…PDKD), 279–372 (TPPA…ESGS), 455–549 (TPEE…DSSI), and 993–1021 (VDTSTNSGNSSSTPPSSNTPPNSTPTAQA). Residues 34 to 44 (SSRTGSSSSQS) are compositionally biased toward low complexity. The segment covering 97 to 114 (QASFQDSAQNQTENASEG) has biased composition (polar residues). Low complexity predominate over residues 115–137 (NSPNSENTNQSSTTETESITTDE). A compositionally biased stretch (polar residues) spans 138 to 155 (QVQNDNESAASVPTTVET). A compositionally biased stretch (low complexity) spans 290-327 (NDPSGSNGNDGSDDSNSSGNTDSNESNPNNSASNNTGS). Residues 328–358 (ENELSSSTPSAQLPNPATPFLSSVSTNSQPI) show a composition bias toward polar residues. The segment covering 461 to 471 (LKSSQLNNQNP) has biased composition (low complexity). Positions 487–501 (SLETSPITNQDSASS) are enriched in polar residues. Composition is skewed to low complexity over residues 504–548 (AIFR…SDSS) and 995–1018 (TSTNSGNSSSTPPSSNTPPNSTPT). In terms of domain architecture, Autotransporter spans 1167-1460 (DEVAYNNLWI…MINCGARMTF (294 aa)).

The protein belongs to the PMP outer membrane protein family.

Its subcellular location is the secreted. The protein localises to the cell wall. It localises to the cell outer membrane. The chain is Probable outer membrane protein PmpC (pmpC) from Chlamydia muridarum (strain MoPn / Nigg).